Reading from the N-terminus, the 252-residue chain is Protein GrpE (252 aa).

Over residues 1-22 the composition is skewed to polar residues; it reads MHNPQSRGHNLSQAMSDQTVTN. A disordered region spans residues 1-70; it reads MHNPQSRGHN…EEDQASEATS (70 aa).

It belongs to the GrpE family. As to quaternary structure, homodimer.

Its subcellular location is the cytoplasm. Its function is as follows. Participates actively in the response to hyperosmotic and heat shock by preventing the aggregation of stress-denatured proteins, in association with DnaK and GrpE. It is the nucleotide exchange factor for DnaK and may function as a thermosensor. Unfolded proteins bind initially to DnaJ; upon interaction with the DnaJ-bound protein, DnaK hydrolyzes its bound ATP, resulting in the formation of a stable complex. GrpE releases ADP from DnaK; ATP binding to DnaK triggers the release of the substrate protein, thus completing the reaction cycle. Several rounds of ATP-dependent interactions between DnaJ, DnaK and GrpE are required for fully efficient folding. This Thermosynechococcus vestitus (strain NIES-2133 / IAM M-273 / BP-1) protein is Protein GrpE.